A 263-amino-acid polypeptide reads, in one-letter code: 3-oxo-5-alpha-steroid 4-dehydrogenase 1 (263 aa).

Transmembrane regions (helical) follow at residues 16-33, 90-110, 115-135, 155-175, and 213-233; these read MLAA…AVLA, ILLA…PFLM, PMPL…GYLQ, FLIG…SDHI, and YALA…FCFL.

This sequence belongs to the steroid 5-alpha reductase family.

It is found in the microsome membrane. Its subcellular location is the endoplasmic reticulum membrane. The catalysed reaction is a 3-oxo-5alpha-steroid + NADP(+) = a 3-oxo-Delta(4)-steroid + NADPH + H(+). It carries out the reaction 5alpha-pregnane-3,20-dione + NADP(+) = progesterone + NADPH + H(+). The enzyme catalyses 17beta-hydroxy-5alpha-androstan-3-one + NADP(+) = testosterone + NADPH + H(+). It catalyses the reaction androst-4-ene-3,17-dione + NADPH + H(+) = 5alpha-androstan-3,17-dione + NADP(+). Converts testosterone into 5-alpha-dihydrotestosterone and progesterone or corticosterone into their corresponding 5-alpha-3-oxosteroids. It plays a central role in sexual differentiation and androgen physiology. This Macaca fascicularis (Crab-eating macaque) protein is 3-oxo-5-alpha-steroid 4-dehydrogenase 1 (SRD5A1).